The following is a 417-amino-acid chain: Phosphoglycerate kinase 2 (417 aa).

N-acetylserine is present on Ser-2. Ser-2 and Ser-4 each carry phosphoserine. Lys-11 carries the N6-acetyllysine modification. Residues Val-23, Asp-24, Phe-25, Asn-26, Gln-38, Arg-39, Ser-62, His-63, Gly-65, and Arg-66 each contribute to the (2R)-3-phosphoglycerate site. 3 positions are modified to N6-acetyllysine: Lys-75, Lys-86, and Lys-97. Positions 122 and 123 each coordinate (2R)-3-phosphoglycerate. An N6-acetyllysine mark is found at Lys-131 and Lys-146. Residues His-170 and Arg-171 each contribute to the (2R)-3-phosphoglycerate site. Tyr-196 bears the Phosphotyrosine mark. At Lys-199 the chain carries N6-acetyllysine. Gly-214 provides a ligand contact to ADP. CDP is bound at residue Gly-214. AMP-binding residues include Ala-215 and Lys-216. Ala-215 contributes to the ATP binding site. Ala-215 is a Mg(2+) binding site. 2 residues coordinate Mg(2+): Ala-218 and Asp-219. CDP is bound at residue Asp-219. Lys-220 is a binding site for AMP. Residue Lys-220 coordinates ATP. Gly-238 serves as a coordination point for ADP. Gly-238 is a CDP binding site. AMP is bound at residue Gly-239. Gly-239 is an ATP binding site. N6-acetyllysine is present on residues Lys-267 and Lys-291. Ala-313 is a binding site for AMP. Ala-313 contacts ATP. CDP contacts are provided by Gly-338 and Phe-343. ADP is bound at residue Phe-343. Glu-344 contributes to the AMP binding site. 3 residues coordinate ATP: Glu-344, Asp-375, and Thr-376. Position 375 (Asp-375) interacts with Mg(2+).

This sequence belongs to the phosphoglycerate kinase family. In terms of assembly, monomer. It depends on Mg(2+) as a cofactor. Testis specific.

The protein localises to the cytoplasm. The enzyme catalyses (2R)-3-phosphoglycerate + ATP = (2R)-3-phospho-glyceroyl phosphate + ADP. The protein operates within carbohydrate degradation; glycolysis; pyruvate from D-glyceraldehyde 3-phosphate: step 2/5. Essential for sperm motility and male fertility but is not required for the completion of spermatogenesis. This chain is Phosphoglycerate kinase 2, found in Sus scrofa (Pig).